We begin with the raw amino-acid sequence, 222 residues long: Leucyl/phenylalanyl-tRNA--protein transferase (222 aa).

This sequence belongs to the L/F-transferase family.

Its subcellular location is the cytoplasm. It catalyses the reaction N-terminal L-lysyl-[protein] + L-leucyl-tRNA(Leu) = N-terminal L-leucyl-L-lysyl-[protein] + tRNA(Leu) + H(+). It carries out the reaction N-terminal L-arginyl-[protein] + L-leucyl-tRNA(Leu) = N-terminal L-leucyl-L-arginyl-[protein] + tRNA(Leu) + H(+). The enzyme catalyses L-phenylalanyl-tRNA(Phe) + an N-terminal L-alpha-aminoacyl-[protein] = an N-terminal L-phenylalanyl-L-alpha-aminoacyl-[protein] + tRNA(Phe). Functionally, functions in the N-end rule pathway of protein degradation where it conjugates Leu, Phe and, less efficiently, Met from aminoacyl-tRNAs to the N-termini of proteins containing an N-terminal arginine or lysine. The polypeptide is Leucyl/phenylalanyl-tRNA--protein transferase (Legionella pneumophila (strain Paris)).